A 225-amino-acid polypeptide reads, in one-letter code: Putative membrane protease YugP (225 aa).

His-95 lines the Zn(2+) pocket. Residue Glu-96 is part of the active site. The Zn(2+) site is built by His-99 and His-103. 3 helical membrane-spanning segments follow: residues 116 to 138 (IFPV…MLLG), 140 to 162 (LNLI…ITLP), and 192 to 212 (VLSA…FELL).

Its subcellular location is the cell membrane. The chain is Putative membrane protease YugP (yugP) from Bacillus subtilis (strain 168).